We begin with the raw amino-acid sequence, 560 residues long: Proline--tRNA ligase (560 aa).

Belongs to the class-II aminoacyl-tRNA synthetase family. ProS type 1 subfamily. In terms of assembly, homodimer.

It is found in the cytoplasm. The catalysed reaction is tRNA(Pro) + L-proline + ATP = L-prolyl-tRNA(Pro) + AMP + diphosphate. In terms of biological role, catalyzes the attachment of proline to tRNA(Pro) in a two-step reaction: proline is first activated by ATP to form Pro-AMP and then transferred to the acceptor end of tRNA(Pro). As ProRS can inadvertently accommodate and process non-cognate amino acids such as alanine and cysteine, to avoid such errors it has two additional distinct editing activities against alanine. One activity is designated as 'pretransfer' editing and involves the tRNA(Pro)-independent hydrolysis of activated Ala-AMP. The other activity is designated 'posttransfer' editing and involves deacylation of mischarged Ala-tRNA(Pro). The misacylated Cys-tRNA(Pro) is not edited by ProRS. This chain is Proline--tRNA ligase, found in Vesicomyosocius okutanii subsp. Calyptogena okutanii (strain HA).